A 338-amino-acid polypeptide reads, in one-letter code: MKVFYDKDCDLSLIKGKTVAIIGYGSQGHAHAQNLNDSGVKVVVGLRKGGASWDKVGKAGLTVLEVNEAVKSADVVMILLPDEQIAEVYKNNVEPNIKQGASLAFAHGFNVHYNQVVPRADLDVWMVAPKAPGHTVRSTYSQGGGVPHLVAVHQDKSGKARDLALSYAMANGGGKAGIIETNFKEETETDLFGEQAVLCGGAVELIKMGFETLVEAGYAPEMAYFECLHELKLIVDLIYEGGIANMNYSISNNAEFGEYVTGPEVINEQSRAAMRNALKRIQNGDYAKMFIQEGRLNYPSMTARRRNTADHKIEVVGAQLRAMMPWIAKNKLVDQSRN.

Residues 1-181 form the KARI N-terminal Rossmann domain; that stretch reads MKVFYDKDCD…GGGKAGIIET (181 aa). Residues 24 to 27, Arg47, and Ser52 each bind NADP(+); that span reads YGSQ. The active site involves His107. Gly133 serves as a coordination point for NADP(+). In terms of domain architecture, KARI C-terminal knotted spans 182–327; that stretch reads NFKEETETDL…AQLRAMMPWI (146 aa). The Mg(2+) site is built by Asp190, Glu194, Glu226, and Glu230. Residue Ser251 participates in substrate binding.

Belongs to the ketol-acid reductoisomerase family. Mg(2+) serves as cofactor.

The catalysed reaction is (2R)-2,3-dihydroxy-3-methylbutanoate + NADP(+) = (2S)-2-acetolactate + NADPH + H(+). It catalyses the reaction (2R,3R)-2,3-dihydroxy-3-methylpentanoate + NADP(+) = (S)-2-ethyl-2-hydroxy-3-oxobutanoate + NADPH + H(+). It functions in the pathway amino-acid biosynthesis; L-isoleucine biosynthesis; L-isoleucine from 2-oxobutanoate: step 2/4. It participates in amino-acid biosynthesis; L-valine biosynthesis; L-valine from pyruvate: step 2/4. In terms of biological role, involved in the biosynthesis of branched-chain amino acids (BCAA). Catalyzes an alkyl-migration followed by a ketol-acid reduction of (S)-2-acetolactate (S2AL) to yield (R)-2,3-dihydroxy-isovalerate. In the isomerase reaction, S2AL is rearranged via a Mg-dependent methyl migration to produce 3-hydroxy-3-methyl-2-ketobutyrate (HMKB). In the reductase reaction, this 2-ketoacid undergoes a metal-dependent reduction by NADPH to yield (R)-2,3-dihydroxy-isovalerate. The protein is Ketol-acid reductoisomerase (NADP(+)) of Paracidovorax citrulli (strain AAC00-1) (Acidovorax citrulli).